The sequence spans 188 residues: GMP synthase [glutamine-hydrolyzing] subunit A (188 aa).

The region spanning 1–188 (MIVILNNGGQ…FCKVCGLLGE (188 aa)) is the Glutamine amidotransferase type-1 domain. Residue Cys-76 is the Nucleophile of the active site. Catalysis depends on residues His-163 and Glu-165.

Heterodimer composed of a glutamine amidotransferase subunit (A) and a GMP-binding subunit (B).

It catalyses the reaction XMP + L-glutamine + ATP + H2O = GMP + L-glutamate + AMP + diphosphate + 2 H(+). It functions in the pathway purine metabolism; GMP biosynthesis; GMP from XMP (L-Gln route): step 1/1. Functionally, catalyzes the synthesis of GMP from XMP. This is GMP synthase [glutamine-hydrolyzing] subunit A from Methanococcus aeolicus (strain ATCC BAA-1280 / DSM 17508 / OCM 812 / Nankai-3).